Reading from the N-terminus, the 217-residue chain is Large ribosomal subunit protein uL3 (217 aa).

Q152 is modified (N5-methylglutamine).

The protein belongs to the universal ribosomal protein uL3 family. In terms of assembly, part of the 50S ribosomal subunit. Forms a cluster with proteins L14 and L19. Post-translationally, methylated by PrmB.

One of the primary rRNA binding proteins, it binds directly near the 3'-end of the 23S rRNA, where it nucleates assembly of the 50S subunit. The protein is Large ribosomal subunit protein uL3 of Blochmanniella pennsylvanica (strain BPEN).